The following is a 700-amino-acid chain: Neoverrucotoxin subunit beta (700 aa).

The region spanning 506-700 (HMPGVETIKD…QKVNGQIKLL (195 aa)) is the B30.2/SPRY domain.

The protein belongs to the SNTX/VTX toxin family. Heterodimer of alpha and beta subunits. In terms of processing, not glycosylated. Post-translationally, four intrachain disulfide linkages are present in the heterodimer. No interchain disulfide bound links the two subunits. As to expression, expressed by the venom gland.

It is found in the secreted. Its function is as follows. Has hemolytic and lethal activities. Its hemolytic activity is inhibited by anionic lipids, especially potently by cardiolipin. In Synanceia verrucosa (Reef stonefish), this protein is Neoverrucotoxin subunit beta.